The following is a 149-amino-acid chain: SsrA-binding protein (149 aa).

Belongs to the SmpB family.

The protein localises to the cytoplasm. In terms of biological role, required for rescue of stalled ribosomes mediated by trans-translation. Binds to transfer-messenger RNA (tmRNA), required for stable association of tmRNA with ribosomes. tmRNA and SmpB together mimic tRNA shape, replacing the anticodon stem-loop with SmpB. tmRNA is encoded by the ssrA gene; the 2 termini fold to resemble tRNA(Ala) and it encodes a 'tag peptide', a short internal open reading frame. During trans-translation Ala-aminoacylated tmRNA acts like a tRNA, entering the A-site of stalled ribosomes, displacing the stalled mRNA. The ribosome then switches to translate the ORF on the tmRNA; the nascent peptide is terminated with the 'tag peptide' encoded by the tmRNA and targeted for degradation. The ribosome is freed to recommence translation, which seems to be the essential function of trans-translation. The polypeptide is SsrA-binding protein (Carboxydothermus hydrogenoformans (strain ATCC BAA-161 / DSM 6008 / Z-2901)).